The chain runs to 150 residues: PTS system galactitol-specific EIIA component (150 aa).

In terms of domain architecture, PTS EIIA type-2 spans 1–144; it reads MTNLFVRSGI…TQLKEYFTKY (144 aa). The Tele-phosphohistidine intermediate role is filled by His62. His62 carries the post-translational modification Phosphohistidine; by HPr.

As to quaternary structure, forms a complex with one each of subunit of GatA, GatB and 2 subunits of GatC.

It is found in the cytoplasm. In terms of biological role, the phosphoenolpyruvate-dependent sugar phosphotransferase system (sugar PTS), a major carbohydrate active transport system, catalyzes the phosphorylation of incoming sugar substrates concomitantly with their translocation across the cell membrane. The enzyme II complex composed of GatA, GatB and GatC is involved in galactitol transport. The sequence is that of PTS system galactitol-specific EIIA component (gatA) from Escherichia coli O157:H7.